The sequence spans 422 residues: Probable D-serine dehydratase (422 aa).

Lysine 105 bears the N6-(pyridoxal phosphate)lysine mark.

The protein belongs to the serine/threonine dehydratase family. DsdA subfamily. Pyridoxal 5'-phosphate is required as a cofactor.

The catalysed reaction is D-serine = pyruvate + NH4(+). The chain is Probable D-serine dehydratase from Carboxydothermus hydrogenoformans (strain ATCC BAA-161 / DSM 6008 / Z-2901).